We begin with the raw amino-acid sequence, 669 residues long: Threonine--tRNA ligase (669 aa).

The TGS domain maps to 3–60 (DAQQITLIVDGEETKVTEGTTGAELFFERRDVVVARVNGVLKDLDQVLTEGADVEGVT). A catalytic region spans residues 260–566 (DHRKLGVELD…LTEHYAGAFP (307 aa)). Zn(2+) contacts are provided by Cys365, His416, and His543.

This sequence belongs to the class-II aminoacyl-tRNA synthetase family. Homodimer. The cofactor is Zn(2+).

The protein localises to the cytoplasm. The enzyme catalyses tRNA(Thr) + L-threonine + ATP = L-threonyl-tRNA(Thr) + AMP + diphosphate + H(+). Its function is as follows. Catalyzes the attachment of threonine to tRNA(Thr) in a two-step reaction: L-threonine is first activated by ATP to form Thr-AMP and then transferred to the acceptor end of tRNA(Thr). Also edits incorrectly charged L-seryl-tRNA(Thr). The protein is Threonine--tRNA ligase of Paenarthrobacter aurescens (strain TC1).